A 373-amino-acid polypeptide reads, in one-letter code: Lipoyl amidotransferase LIPT1, mitochondrial (373 aa).

The transit peptide at 1–25 directs the protein to the mitochondrion; the sequence is MLIPFSMKNCFQLLCNLKVPAAGFK. Residues 57 to 243 enclose the BPL/LPL catalytic domain; that stretch reads LEGKPVLFLW…EYATSHQIDN (187 aa). (R)-lipoyl-5'-AMP contacts are provided by Y107, R151, K161, T179, T208, and A210.

It belongs to the LplA family.

The protein resides in the mitochondrion. It carries out the reaction N(6)-[(R)-lipoyl]-L-lysyl-[glycine-cleavage complex H protein] + L-lysyl-[lipoyl-carrier protein] = L-lysyl-[glycine-cleavage complex H protein] + N(6)-[(R)-lipoyl]-L-lysyl-[lipoyl-carrier protein]. The enzyme catalyses (R)-lipoyl-5'-AMP + L-lysyl-[lipoyl-carrier protein] = N(6)-[(R)-lipoyl]-L-lysyl-[lipoyl-carrier protein] + AMP + 2 H(+). The protein operates within protein modification; protein lipoylation via exogenous pathway; protein N(6)-(lipoyl)lysine from lipoate: step 2/2. With respect to regulation, inhibited by lipoyl-AMP analogs including hexanoyl-, octanoyl- and decanoyl-AMP. In terms of biological role, lipoyl amidotransferase that catalyzes the transfer of lipoyl moieties from lipoyl-protein H of the glycine cleavage system (lipoyl-GCSH) to E2 subunits of the pyruvate dehydrogenase complex (PDCE2). Unable to catalyze the transfer of octanoyl from octanoyl-GCSH to PDCE2. In vitro, it is also able to catalyze the transfer of the lipoyl group from lipoyl-AMP to the specific lysine residue of lipoyl domains of lipoate-dependent enzymes but this reaction may not be physiologically relevant. The chain is Lipoyl amidotransferase LIPT1, mitochondrial (LIPT1) from Bos taurus (Bovine).